A 101-amino-acid polypeptide reads, in one-letter code: Small ribosomal subunit protein uS10 (101 aa).

It belongs to the universal ribosomal protein uS10 family. Part of the 30S ribosomal subunit.

Functionally, involved in the binding of tRNA to the ribosomes. This chain is Small ribosomal subunit protein uS10, found in Parabacteroides distasonis (strain ATCC 8503 / DSM 20701 / CIP 104284 / JCM 5825 / NCTC 11152).